The following is a 194-amino-acid chain: Flavin prenyltransferase UbiX (194 aa).

Residues Gly9 to Ser11, Ser35, Ser86 to Thr89, and Arg121 contribute to the FMN site. Residues Tyr151 and Lys167 each contribute to the dimethylallyl phosphate site.

It belongs to the UbiX/PAD1 family.

The enzyme catalyses dimethylallyl phosphate + FMNH2 = prenylated FMNH2 + phosphate. Functionally, involved in the carboxylation of phenylphosphate. In terms of biological role, flavin prenyltransferase that catalyzes the synthesis of the prenylated FMN cofactor (prenyl-FMN) for 4-hydroxy-3-polyprenylbenzoic acid decarboxylase UbiD. The prenyltransferase is metal-independent and links a dimethylallyl moiety from dimethylallyl monophosphate (DMAP) to the flavin N5 and C6 atoms of FMN. This chain is Flavin prenyltransferase UbiX, found in Thauera aromatica.